An 89-amino-acid chain; its full sequence is Small ribosomal subunit protein uS15 (89 aa).

Belongs to the universal ribosomal protein uS15 family. As to quaternary structure, part of the 30S ribosomal subunit. Forms a bridge to the 50S subunit in the 70S ribosome, contacting the 23S rRNA.

One of the primary rRNA binding proteins, it binds directly to 16S rRNA where it helps nucleate assembly of the platform of the 30S subunit by binding and bridging several RNA helices of the 16S rRNA. Functionally, forms an intersubunit bridge (bridge B4) with the 23S rRNA of the 50S subunit in the ribosome. The polypeptide is Small ribosomal subunit protein uS15 (Streptococcus mutans serotype c (strain ATCC 700610 / UA159)).